The primary structure comprises 1377 residues: MAQTHSFNGRKRVRKFFGKIPEVAEMPNLIEVQKASYDQFLMVEEPSGGRPDEGLQAVFKSVFPIQDFSGASMLEFVRYEFDPPKFDVDECRQRDLTYSAPLKVTLRLIVFDIDEDTGAKSIKDIKEQDVYMGDMPLMTDNGTFIVNGTERVIVSQMHRSPGVFFDHDKGKTHSSGKLLFAARVIPYRGSWLDIEFDSKDIVYARIDRRRKLPATTLLMALGMDGEEILSTFYKTVTYTRDGDNWRIPYSAERFKGMKIISDLVDADTGEVVLEAGKKLTARAAKQLAEKGLKAIKATEDDLFGSYLAEDVVNYATGEIYLEAGDEIDEKVLKTLIDTGETEINVLDIDHVNIGAYIRNTLAVDKNESRQEALFDIYRVMRPGEPPTMDSAEAMFHSLFFDSERYDLSAVGRVKMNMRLDLDAEDTVRVLRKEDILAVVKMLVELRDGRGEIDDIDNLGNRRVRSVGELMENQYRVGLLRMERAIKERMSSIEIDTVMPQDLINAKPAAAAVREFFGSSQLSQFMDQTNPLSEITHKRRLSALGPGGLTRERAGFEVRDVHPTHYGRICPIETPEGPNIGLINSLATFARVNKYGFIESPYRKVVDGKVTNDVVYLSAMEEAKHSVAQVNVELDEQGGFVDEFVICRHAGEVMMAPRENVDLMDVSPKQLVSVAAALIPFLENDDANRALMGSNMQRQAVPLVRAEAPFVGTGMEPIVARDSGAAIAARRGGIVDQVDATRIVIRATEELDPSKSGVDIYRLQKFQRSNQSTCINQRPLVRVGDRIHKGDIIADGPSTDLGDLALGRNVLVAFMPWNGYNYEDSILLSEKIVSDDVFTSIHIEEFEVAARDTKLGPEEITRDIPNVSEEALKNLDEAGIVYIGAEVHPGDILVGKITPKGESPMTPEEKLLRAIFGEKASDVRDTSMRMPPGTYGTVVEVRVFNRHGVEKDERAMAIEREEIERLAKDRDDEQAILDRNVYGRLVDMIDGKVAAAGPKGFKKGTTITRELMTEYPRSQWWQFAVEDEKLQGELEALRSQYDDSKKLLEARFMDKVEKVQRGDEMPPGVMKMVKVFVAVKRKIQPGDKMAGRHGNKGVVSRILPVEDMPFLEDGTHADIVLNPLGVPSRMNVGQILETHLGWACAGMGKKIGELLDVYRKTANIEPLRQTLEHIYPDNDRNEPVRSYDDDAILMLANQVKRGVSIATPVFDGAVEADINAMLTDAGLATSGQSTLYDGRTGEPFDRQVTMGYIYMLKLHHLVDDKIHARSIGPYSLVTQQPLGGKAQFGGQRFGEMEVWALEAYGAAYTLQEMLTVKSDDVAGRTKVYEAIVRGDDTFEAGIPESFNVLVKEMRSLGLNVELDDTREAEQPALPDAAE.

This sequence belongs to the RNA polymerase beta chain family. In terms of assembly, the RNAP catalytic core consists of 2 alpha, 1 beta, 1 beta' and 1 omega subunit. When a sigma factor is associated with the core the holoenzyme is formed, which can initiate transcription.

It carries out the reaction RNA(n) + a ribonucleoside 5'-triphosphate = RNA(n+1) + diphosphate. DNA-dependent RNA polymerase catalyzes the transcription of DNA into RNA using the four ribonucleoside triphosphates as substrates. The protein is DNA-directed RNA polymerase subunit beta of Brucella melitensis biotype 2 (strain ATCC 23457).